A 953-amino-acid polypeptide reads, in one-letter code: Vacuolar membrane protease (953 aa).

Topologically, residues 1–16 are cytoplasmic; the sequence is MDQTKPPRRNPLAFTP. A helical transmembrane segment spans residues 17–37; sequence WPVTLITAVVYLAFVIPLLVI. At 38–382 the chain is on the vacuolar side; that stretch reads HHVVPSAPTS…TFVLFRLHTL (345 aa). N-linked (GlcNAc...) asparagine glycosylation is found at asparagine 53 and asparagine 115. Zn(2+) contacts are provided by histidine 165 and aspartate 177. The active-site Proton acceptor is glutamate 211. The Zn(2+) site is built by glutamate 212, glutamate 237, and histidine 310. A helical transmembrane segment spans residues 383–403; it reads FALSVTLLVVAPIVLLLTSII. Over 404 to 437 the chain is Cytoplasmic; sequence LTKVDKMYLFRTSIRPEGSLEVLPLYGDRGVIRY. A helical transmembrane segment spans residues 438–458; sequence PFLLGIPTAVTIGLAYLLTKF. Residues 459 to 464 lie on the Vacuolar side of the membrane; it reads NPYIVH. Residues 465–485 form a helical membrane-spanning segment; that stretch reads SSQYAVWSMMVSVWIFLAWFV. Residues 486 to 499 lie on the Cytoplasmic side of the membrane; that stretch reads SRVADFARPSAFHR. The chain crosses the membrane as a helical span at residues 500–520; the sequence is VYTLTWTFVVMWVLQVIATVY. Over 521 to 524 the chain is Vacuolar; it reads QDRW. Residues 525 to 545 form a helical membrane-spanning segment; the sequence is ALGGSYFIFFAYAGTFLATWI. At 546-650 the chain is on the cytoplasmic side; the sequence is SYLELFALPR…SLPKWLWLLQ (105 aa). Residues 570 to 599 form a disordered region; that stretch reads ASSHSSRRGLSEEDEEDEDEAPTESTSLLG. The segment covering 581–591 has biased composition (acidic residues); the sequence is EEDEEDEDEAP. A helical transmembrane segment spans residues 651 to 671; it reads FLLAAPIVLILVGPIALLLTG. Residues 672–684 lie on the Vacuolar side of the membrane; the sequence is SLHQTGQDGSSSL. The chain crosses the membrane as a helical span at residues 685–705; the sequence is FIYIAIVALTTLLLSPMLPFV. Over 706 to 711 the chain is Cytoplasmic; sequence HRCTYH. A helical transmembrane segment spans residues 712–732; it reads IPLFMLAVFAGTLIYNLVAFP. The Vacuolar segment spans residues 733–953; that stretch reads FSDSNRLKLF…VEGRKSFEIA (221 aa). The N-linked (GlcNAc...) asparagine glycan is linked to asparagine 779.

It belongs to the peptidase M28 family. Zn(2+) is required as a cofactor.

The protein resides in the vacuole membrane. Functionally, may be involved in vacuolar sorting and osmoregulation. The polypeptide is Vacuolar membrane protease (Emericella nidulans (strain FGSC A4 / ATCC 38163 / CBS 112.46 / NRRL 194 / M139) (Aspergillus nidulans)).